Consider the following 506-residue polypeptide: Serine/threonine-protein kinase RIO1 (506 aa).

Residues 22 to 52 are disordered; sequence TASSSSDDEPEQAVVKQEKLEAGEQIEEQYD. The Protein kinase domain occupies 142–506; the sequence is LNIDGCISTG…KKRAHRQHMK (365 aa). ATP is bound by residues 148-156, K169, and L241; that span reads ISTGKEANV. D285 (proton acceptor) is an active-site residue. Position 290 (N290) interacts with ATP. Residues N290 and D302 each contribute to the Mg(2+) site. The active-site 4-aspartylphosphate intermediate is D302. The interval 418-506 is disordered; the sequence is GDGFGEEHDD…KKRAHRQHMK (89 aa). Positions 424-435 are enriched in acidic residues; that stretch reads EHDDSDDNDDEE. The segment covering 454 to 490 has biased composition (basic and acidic residues); it reads EKERKIAMHTRNREETAEERKERKAAVKEEKREQRKE. Positions 491–506 are enriched in basic residues; it reads KIPKHLKKRAHRQHMK.

The protein belongs to the protein kinase superfamily. RIO-type Ser/Thr kinase family. Requires Mg(2+) as cofactor. Expressed in vulva and uterine cells, uterine seam cells (utse), spermatheca and in the nervous system including chemosensory neurons in the head, nerve ring neurons (RID/RIF), inhibitory motor neurons (DA/DD/VA/VD), mechanosensory neurons (ALML/PLML) and tail sensory neurons (DVA//PDA). Also expressed in intestine and pharynx (procorpus) and rectal valve and gland.

The protein resides in the cytoplasm. The catalysed reaction is L-seryl-[protein] + ATP = O-phospho-L-seryl-[protein] + ADP + H(+). It carries out the reaction L-threonyl-[protein] + ATP = O-phospho-L-threonyl-[protein] + ADP + H(+). In terms of biological role, involved in the final steps of cytoplasmic maturation of the 40S ribosomal subunit. Despite the protein kinase domain is proposed to act predominantly as an ATPase. The catalytic activity regulates its dynamic association with the 40S subunit. Plays a role in oogenesis by regulating germ cell proliferation, progression through diplotene and diakinesis stages and oocyte maturation. Regulates germline development probably by regulating the phosphorylation of mpk-1. Involved in larval development. This Caenorhabditis elegans protein is Serine/threonine-protein kinase RIO1.